The chain runs to 415 residues: Multidrug resistance protein MdtA (415 aa).

The first 21 residues, 1–21 (MKGSYKSRWVIVIVVVIAAIA), serve as a signal peptide directing secretion. Polar residues predominate over residues 31-47 (DSQSAAPGATKQAQQSP). Disordered stretches follow at residues 31 to 56 (DSQSAAPGATKQAQQSPAGGRRGMRA) and 390 to 415 (VVETQSATTPEEKATSREYAKKGARS). A compositionally biased stretch (basic and acidic residues) spans 399–415 (PEEKATSREYAKKGARS).

It belongs to the membrane fusion protein (MFP) (TC 8.A.1) family. As to quaternary structure, part of a tripartite efflux system composed of MdtA, MdtB and MdtC.

It localises to the cell inner membrane. Functionally, the MdtABC tripartite complex confers resistance against novobiocin and deoxycholate. This is Multidrug resistance protein MdtA from Escherichia coli O6:H1 (strain CFT073 / ATCC 700928 / UPEC).